The chain runs to 519 residues: MSVPIVILAIIAIVVGVVGGYYLRKSVHERKLDAAKYTAAGVLAEAKKQAETATKEALLEAKEDSHKYRAEVETELKERRAEVQKQEDRLIQREETLDRKDNSLEKRENSLNRRDKKLSAEEQNLVKKQQQADSLIEKRQAAVEAVAALSQDDARELIISEAKTALASERAKMIKESEETARKTAQANAKDLIVSAIQRSAADMVTETTITVVTLPNDDMKGRIIGREGRNIRTLETLTGIDLIIDDTPEAVVLSGFDPLRREVAKIALEKLIQDGRIHPARIEEMVAKAKKELDEHVRELGEQATFDLGIHSMHPELVKLVGRLNFRISHGQNALAHSIEVAKITGVLAAELGEDVTLAKRAGLLHDIGRAAEHEDDNSYITTGMELTKKYRESSVVVNAIAAQAEETAAQSVIAELVSTADIISATRPGARSDSLESYIHRLDKLETIANEFDGVDHSFAIQAGREVRVIVRPDRISDTDAVVLARDIKQQIEGDLDYPGHVKVSVIREVRSVEYAK.

The helical transmembrane segment at 3 to 23 (VPIVILAIIAIVVGVVGGYYL) threads the bilayer. Positions 92–120 (QREETLDRKDNSLEKRENSLNRRDKKLSA) are enriched in basic and acidic residues. Residues 92–124 (QREETLDRKDNSLEKRENSLNRRDKKLSAEEQN) form a disordered region. Residues 209–272 (TITVVTLPND…EVAKIALEKL (64 aa)) form the KH domain. Residues 335–428 (ALAHSIEVAK…VSTADIISAT (94 aa)) form the HD domain.

Belongs to the RNase Y family.

The protein localises to the cell membrane. Endoribonuclease that initiates mRNA decay. This is Ribonuclease Y 1 from Levilactobacillus brevis (strain ATCC 367 / BCRC 12310 / CIP 105137 / JCM 1170 / LMG 11437 / NCIMB 947 / NCTC 947) (Lactobacillus brevis).